Here is a 104-residue protein sequence, read N- to C-terminus: Urease subunit beta (104 aa).

The protein belongs to the urease beta subunit family. As to quaternary structure, heterotrimer of UreA (gamma), UreB (beta) and UreC (alpha) subunits. Three heterotrimers associate to form the active enzyme.

It is found in the cytoplasm. The enzyme catalyses urea + 2 H2O + H(+) = hydrogencarbonate + 2 NH4(+). It participates in nitrogen metabolism; urea degradation; CO(2) and NH(3) from urea (urease route): step 1/1. This Mycobacterium bovis (strain BCG / Pasteur 1173P2) protein is Urease subunit beta.